The primary structure comprises 90 residues: Small ribosomal subunit protein bS20 (90 aa).

It belongs to the bacterial ribosomal protein bS20 family.

Binds directly to 16S ribosomal RNA. The protein is Small ribosomal subunit protein bS20 of Acidiphilium cryptum (strain JF-5).